We begin with the raw amino-acid sequence, 794 residues long: Hyaluronan mediated motility receptor (794 aa).

Residues methionine 1–arginine 87 are disordered. Serine 20 is subject to Phosphoserine. The span at serine 74–arginine 87 shows a compositional bias: basic and acidic residues. Asparagine 134, asparagine 279, asparagine 446, asparagine 467, asparagine 488, asparagine 509, asparagine 530, asparagine 561, and asparagine 601 each carry an N-linked (GlcNAc...) asparagine glycan. Residues glutamate 365–glutamine 630 form a required for interaction with FAM83D region. 5 tandem repeats follow at residues glutamine 442 to valine 462, glutamine 463 to glutamate 483, glutamine 484 to glutamate 504, glutamine 505 to valine 525, and glutamine 526 to tyrosine 546. Residues glutamine 442–tyrosine 546 are 5 X 21 AA tandem repeats. Hyaluronic acid-binding stretches follow at residues lysine 719–lysine 729 and lysine 741–lysine 750. A Phosphothreonine modification is found at threonine 784.

As to quaternary structure, interacts with ANKRD26. Interacts with DYNLL1. Interacts with FAM83D/CHICA. Ubiquitously expressed.

The protein resides in the cell surface. It localises to the cytoplasm. Its subcellular location is the cytoskeleton. The protein localises to the spindle. In terms of biological role, receptor for hyaluronic acid (HA). Involved in cell motility. When hyaluronan binds to HMMR, the phosphorylation of a number of proteins, including the PTK2/FAK1 occurs. May also be involved in cellular transformation and metastasis formation, and in regulating extracellular-regulated kinase (ERK) activity. May act as a regulator of adipogenesis. This chain is Hyaluronan mediated motility receptor (Hmmr), found in Mus musculus (Mouse).